We begin with the raw amino-acid sequence, 350 residues long: Chorismate synthase (350 aa).

NADP(+) is bound at residue Arg-48. Residues 125–127 (RSS), Gly-277, 292–296 (KPIPS), and Arg-318 each bind FMN.

The protein belongs to the chorismate synthase family. As to quaternary structure, homotetramer. FMNH2 serves as cofactor.

It carries out the reaction 5-O-(1-carboxyvinyl)-3-phosphoshikimate = chorismate + phosphate. It functions in the pathway metabolic intermediate biosynthesis; chorismate biosynthesis; chorismate from D-erythrose 4-phosphate and phosphoenolpyruvate: step 7/7. In terms of biological role, catalyzes the anti-1,4-elimination of the C-3 phosphate and the C-6 proR hydrogen from 5-enolpyruvylshikimate-3-phosphate (EPSP) to yield chorismate, which is the branch point compound that serves as the starting substrate for the three terminal pathways of aromatic amino acid biosynthesis. This reaction introduces a second double bond into the aromatic ring system. The sequence is that of Chorismate synthase from Maridesulfovibrio salexigens (strain ATCC 14822 / DSM 2638 / NCIMB 8403 / VKM B-1763) (Desulfovibrio salexigens).